The chain runs to 537 residues: Leucine-rich repeat LGI family member 4 (537 aa).

The signal sequence occupies residues 1–19 (MGGAGILLLLLAGAGVVVA). LRR repeat units lie at residues 53-74 (TLLS…SFLR), 77-98 (SLHL…AFAG), 101-122 (HLQY…ALRG), and 125-146 (SLTH…LFRG). One can recognise an LRRCT domain in the interval 158 to 208 (NPFQCDCRVLWLLQWMPTVNASVGTGACAGPASLSHMQLHHLDPKTFKCRA). A glycan (N-linked (GlcNAc...) asparagine) is linked at Asn-177. 7 EAR repeats span residues 210 to 252 (ELSW…SWDY), 256 to 298 (RFRP…ARPS), 302 to 349 (RLAP…CRDG), 351 to 394 (GFYP…HWTG), 396 to 439 (RFER…RWDG), 441 to 483 (MFRL…RLEP), and 487 to 532 (LLEP…QHHE).

In terms of assembly, can bind to ADAM11, ADAM22 and ADAM23. As to expression, widely expressed, with highest expression in brain.

The protein resides in the secreted. Its function is as follows. Component of Schwann cell signaling pathway(s) that controls axon segregation and myelin formation. The polypeptide is Leucine-rich repeat LGI family member 4 (LGI4) (Homo sapiens (Human)).